The sequence spans 235 residues: Large ribosomal subunit protein uL1 (235 aa).

The protein belongs to the universal ribosomal protein uL1 family. As to quaternary structure, part of the 50S ribosomal subunit.

In terms of biological role, binds directly to 23S rRNA. The L1 stalk is quite mobile in the ribosome, and is involved in E site tRNA release. Protein L1 is also a translational repressor protein, it controls the translation of the L11 operon by binding to its mRNA. The polypeptide is Large ribosomal subunit protein uL1 (Blochmanniella floridana).